The primary structure comprises 956 residues: Outer capsid protein VP2 (956 aa).

It belongs to the orbivirus VP2 family.

The protein localises to the virion. Its function is as follows. The VP2 protein is one of the two proteins (with VP5) which constitute the virus particle outer capsid. It is the major target of the host immunogenic response. Responsible for viral attachment to target host cell, probably by binding to sialic acid. This attachment induces virion internalization predominantly through clathrin-dependent endocytosis. The protein is Outer capsid protein VP2 (Segment-2) of Bluetongue virus 10 (isolate USA) (BTV 10).